Consider the following 354-residue polypeptide: Uroporphyrinogen decarboxylase (354 aa).

Residues 27 to 31 (RQAGR), Asp-77, Tyr-154, Thr-209, and His-327 contribute to the substrate site.

This sequence belongs to the uroporphyrinogen decarboxylase family. Homodimer.

The protein localises to the cytoplasm. The catalysed reaction is uroporphyrinogen III + 4 H(+) = coproporphyrinogen III + 4 CO2. Its pathway is porphyrin-containing compound metabolism; protoporphyrin-IX biosynthesis; coproporphyrinogen-III from 5-aminolevulinate: step 4/4. In terms of biological role, catalyzes the decarboxylation of four acetate groups of uroporphyrinogen-III to yield coproporphyrinogen-III. This Psychromonas ingrahamii (strain DSM 17664 / CCUG 51855 / 37) protein is Uroporphyrinogen decarboxylase.